A 641-amino-acid polypeptide reads, in one-letter code: Serine/threonine-protein kinase pink-1, mitochondrial (641 aa).

Residues 1 to 74 constitute a mitochondrion transit peptide; that stretch reads MSMKRFGKAA…TRHGRVFRPF (74 aa). The region spanning 137–483 is the Protein kinase domain; it reads YEFGEFLGQG…AANALNLSLF (347 aa). Residues 143–151 and lysine 199 each bind ATP; that span reads LGQGCNAAV. The active-site Proton acceptor is the aspartate 338.

It belongs to the protein kinase superfamily. Ser/Thr protein kinase family. Requires Mg(2+) as cofactor. Post-translationally, autophosphorylated.

The protein resides in the mitochondrion. The catalysed reaction is L-seryl-[protein] + ATP = O-phospho-L-seryl-[protein] + ADP + H(+). The enzyme catalyses L-threonyl-[protein] + ATP = O-phospho-L-threonyl-[protein] + ADP + H(+). Functionally, protects against mitochondrial dysfunction during cellular stress, potentially by phosphorylating mitochondrial proteins. Plays a role in mitophagy. This is Serine/threonine-protein kinase pink-1, mitochondrial (pink-1) from Caenorhabditis elegans.